A 141-amino-acid chain; its full sequence is MLTAEDKKLITQLWEKVAGHQDDFGNEALQRMFVTYPQTKTYFPHFDLHPGSEQVRGHGKKVAAALGNAVKSLDNISQALSELSNLHAYNLRVDPVNFKLLAQCFQVVLAAHLGKDYTPDMHAAFDKFLSAVAAVLAEKYR.

Residues 1-141 enclose the Globin domain; it reads MLTAEDKKLI…VAAVLAEKYR (141 aa). Heme b-binding residues include histidine 58 and histidine 87.

As to quaternary structure, heterotetramer of two alpha-D chains and two beta chains. In terms of tissue distribution, red blood cells.

Involved in oxygen transport from the lung to the various peripheral tissues. The chain is Hemoglobin subunit alpha-D (HBAD) from Aythya fuligula (Tufted duck).